Here is a 328-residue protein sequence, read N- to C-terminus: Malate dehydrogenase (328 aa).

11–17 provides a ligand contact to NAD(+); the sequence is GAAGQIG. Residues arginine 94 and arginine 100 each contribute to the substrate site. NAD(+) is bound by residues asparagine 107, glutamine 114, and 131–133; that span reads VGN. Substrate contacts are provided by asparagine 133 and arginine 164. The Proton acceptor role is filled by histidine 189.

This sequence belongs to the LDH/MDH superfamily. MDH type 2 family.

The enzyme catalyses (S)-malate + NAD(+) = oxaloacetate + NADH + H(+). Catalyzes the reversible oxidation of malate to oxaloacetate. This is Malate dehydrogenase from Xylella fastidiosa (strain 9a5c).